The sequence spans 154 residues: 6,7-dimethyl-8-ribityllumazine synthase (154 aa).

5-amino-6-(D-ribitylamino)uracil contacts are provided by residues Phe-22, 56–58 (AFE), and 80–82 (AVI). 85-86 (ST) serves as a coordination point for (2S)-2-hydroxy-3-oxobutyl phosphate. His-88 (proton donor) is an active-site residue. A 5-amino-6-(D-ribitylamino)uracil-binding site is contributed by Phe-113. Arg-127 contacts (2S)-2-hydroxy-3-oxobutyl phosphate.

The protein belongs to the DMRL synthase family.

It catalyses the reaction (2S)-2-hydroxy-3-oxobutyl phosphate + 5-amino-6-(D-ribitylamino)uracil = 6,7-dimethyl-8-(1-D-ribityl)lumazine + phosphate + 2 H2O + H(+). The protein operates within cofactor biosynthesis; riboflavin biosynthesis; riboflavin from 2-hydroxy-3-oxobutyl phosphate and 5-amino-6-(D-ribitylamino)uracil: step 1/2. Catalyzes the formation of 6,7-dimethyl-8-ribityllumazine by condensation of 5-amino-6-(D-ribitylamino)uracil with 3,4-dihydroxy-2-butanone 4-phosphate. This is the penultimate step in the biosynthesis of riboflavin. This Clostridium beijerinckii (strain ATCC 51743 / NCIMB 8052) (Clostridium acetobutylicum) protein is 6,7-dimethyl-8-ribityllumazine synthase.